A 102-amino-acid polypeptide reads, in one-letter code: Small ribosomal subunit protein uS10 (102 aa).

Belongs to the universal ribosomal protein uS10 family. As to quaternary structure, part of the 30S ribosomal subunit.

Involved in the binding of tRNA to the ribosomes. The protein is Small ribosomal subunit protein uS10 of Methanococcus maripaludis (strain C5 / ATCC BAA-1333).